A 454-amino-acid chain; its full sequence is tRNA modification GTPase MnmE (454 aa).

Arg23, Glu86, and Arg125 together coordinate (6S)-5-formyl-5,6,7,8-tetrahydrofolate. The TrmE-type G domain occupies 221–376 (GLTLAIVGRP…LREQILRMVS (156 aa)). Asn231 is a binding site for K(+). GTP-binding positions include 231–236 (NVGKSS), 250–256 (TAIPGTT), and 275–278 (DTAG). Ser235 is a Mg(2+) binding site. 3 residues coordinate K(+): Thr250, Ile252, and Thr255. Thr256 contributes to the Mg(2+) binding site. Lys454 lines the (6S)-5-formyl-5,6,7,8-tetrahydrofolate pocket.

The protein belongs to the TRAFAC class TrmE-Era-EngA-EngB-Septin-like GTPase superfamily. TrmE GTPase family. Homodimer. Heterotetramer of two MnmE and two MnmG subunits. The cofactor is K(+).

The protein localises to the cytoplasm. Its function is as follows. Exhibits a very high intrinsic GTPase hydrolysis rate. Involved in the addition of a carboxymethylaminomethyl (cmnm) group at the wobble position (U34) of certain tRNAs, forming tRNA-cmnm(5)s(2)U34. This Koribacter versatilis (strain Ellin345) protein is tRNA modification GTPase MnmE.